A 203-amino-acid polypeptide reads, in one-letter code: Small ribosomal subunit protein uS4 (203 aa).

The interval 15-46 (LGENIWGRPKSSVNRRSYGPGQHGQRRKSKVS) is disordered. Residues 94–154 (QRLDMVVYRA…KKAKEMALIA (61 aa)) form the S4 RNA-binding domain.

The protein belongs to the universal ribosomal protein uS4 family. As to quaternary structure, part of the 30S ribosomal subunit. Contacts protein S5. The interaction surface between S4 and S5 is involved in control of translational fidelity.

One of the primary rRNA binding proteins, it binds directly to 16S rRNA where it nucleates assembly of the body of the 30S subunit. Its function is as follows. With S5 and S12 plays an important role in translational accuracy. In Novosphingobium aromaticivorans (strain ATCC 700278 / DSM 12444 / CCUG 56034 / CIP 105152 / NBRC 16084 / F199), this protein is Small ribosomal subunit protein uS4.